We begin with the raw amino-acid sequence, 365 residues long: Heterogeneous nuclear ribonucleoproteins A1 homolog (365 aa).

Positions 4-94 (SEAPNEPEQL…EPKRAVSRED (91 aa)) are globular A domain. RRM domains lie at 14–97 (RKLF…DSSR) and 105–184 (KKIF…LSKQ). The tract at residues 95-185 (SSRPGAHLTV…QVRKALSKQE (91 aa)) is globular B domain. Disordered regions lie at residues 175 to 208 (SQVR…RGGF) and 328 to 365 (GPMK…GRRF). 2 stretches are compositionally biased toward gly residues: residues 198-208 (GSGNYGSRGGF) and 330-365 (MKGG…GRRF). Residues 321–359 (SQSSSNFGPMKGGNYGGGRNSGPYGGGYGGGSASSSSGY) form a nuclear targeting sequence region.

It is found in the nucleus. Its subcellular location is the cytoplasm. Functionally, this protein is a component of ribonucleosomes. This is Heterogeneous nuclear ribonucleoproteins A1 homolog (hnrnpa1) from Xenopus laevis (African clawed frog).